We begin with the raw amino-acid sequence, 383 residues long: Probable arabinan endo-1,5-alpha-L-arabinosidase D (383 aa).

Residues 1–22 (MVHITLPGLLLCLCLYLSVAPA) form the signal peptide. The active-site Proton acceptor is the aspartate 49. Asparagine 75, asparagine 163, and asparagine 206 each carry an N-linked (GlcNAc...) asparagine glycan. Residue glutamate 227 is the Proton donor of the active site. A glycan (N-linked (GlcNAc...) asparagine) is linked at asparagine 325. A lipid anchor (GPI-anchor amidated asparagine) is attached at asparagine 356. Positions 357-383 (PGNSLQPPSSVSLQIVAFLCLVILFTL) are cleaved as a propeptide — removed in mature form.

It belongs to the glycosyl hydrolase 43 family.

It localises to the cell membrane. The enzyme catalyses Endohydrolysis of (1-&gt;5)-alpha-arabinofuranosidic linkages in (1-&gt;5)-arabinans.. Its pathway is glycan metabolism; L-arabinan degradation. In terms of biological role, endo-1,5-alpha-L-arabinanase involved in degradation of pectin. Its preferred substrate is linear 1,5-alpha-L-arabinan. The polypeptide is Probable arabinan endo-1,5-alpha-L-arabinosidase D (abnD) (Emericella nidulans (strain FGSC A4 / ATCC 38163 / CBS 112.46 / NRRL 194 / M139) (Aspergillus nidulans)).